We begin with the raw amino-acid sequence, 171 residues long: Large ribosomal subunit protein uL5 (171 aa).

Belongs to the universal ribosomal protein uL5 family. Part of the 50S ribosomal subunit; contacts the 5S rRNA and probably tRNA. Forms a bridge to the 30S subunit in the 70S ribosome.

Its function is as follows. This is one of the proteins that bind and probably mediate the attachment of the 5S RNA into the large ribosomal subunit, where it forms part of the central protuberance. In the 70S ribosome it contacts protein S13 of the 30S subunit (bridge B1b), connecting the 2 subunits; this bridge is implicated in subunit movement. May contact the P site tRNA; the 5S rRNA and some of its associated proteins might help stabilize positioning of ribosome-bound tRNAs. This chain is Large ribosomal subunit protein uL5, found in Methanocorpusculum labreanum (strain ATCC 43576 / DSM 4855 / Z).